The sequence spans 485 residues: MSIRYESVENLLTLIKDKKIKPSDVVKDVYDAIEETDPTIKSFLALDKENAIKKAQELDELQAKDQMDGKLFGIPMGIKDNIITNGLETTCASKMLEEFVPIYESTVMEKLHNENAVLIGKLNMDEFAMGGSTETSYFKKTVNPFDHKAVPGGSSGGSAAAVAAGLVPFSLGSDTGGSIRQPAAYCGVVGMKPTYGRVSRFGLVAFASSLDQIGPLTRNVKDNAIVLEAISGADVNDSTSASVDDVDFTSEIGKDIKGLKVALPKEYLGEGVADDVKEAVQNAVETLKSLGAVVEEVSLPNTKFGIPSYYVIASSEASSNLSRFDGIRYGYHSKEAHSLEELYKMSRSEGFGKEVKRRIFLGTFALSSGYYDAYYKKSQKVRTLIKNDFDKVFENYDVVVGPTAPTTAFNLGEEIDDPLTMYANDLLTTPVNLAGLPGISVPCGQSNGRPIGLQFIGKPFDEKTLYRVAYQYETQYNLHDVYEKL.

Catalysis depends on charge relay system residues Lys79 and Ser154. Ser178 acts as the Acyl-ester intermediate in catalysis.

The protein belongs to the amidase family. GatA subfamily. As to quaternary structure, heterotrimer of A, B and C subunits.

The catalysed reaction is L-glutamyl-tRNA(Gln) + L-glutamine + ATP + H2O = L-glutaminyl-tRNA(Gln) + L-glutamate + ADP + phosphate + H(+). Its function is as follows. Allows the formation of correctly charged Gln-tRNA(Gln) through the transamidation of misacylated Glu-tRNA(Gln) in organisms which lack glutaminyl-tRNA synthetase. The reaction takes place in the presence of glutamine and ATP through an activated gamma-phospho-Glu-tRNA(Gln). This is Glutamyl-tRNA(Gln) amidotransferase subunit A from Staphylococcus aureus (strain bovine RF122 / ET3-1).